Reading from the N-terminus, the 622-residue chain is Low affinity potassium transport system protein Kup (622 aa).

12 helical membrane-spanning segments follow: residues 9–29 (LSAV…TSPL), 46–66 (PDVV…VVSV), 101–121 (ILVV…VITP), 137–157 (PALD…LFVI), 165–185 (VGKL…LLGL), 213–233 (VSFF…ALYA), 247–267 (WFTV…ALLL), 276–296 (PFFL…ATLA), 337–357 (IYIP…IIGF), 363–383 (LAAA…ILFC), 395–415 (FLVV…FSAN), and 416–436 (VLKL…MFII).

The protein belongs to the HAK/KUP transporter (TC 2.A.72) family.

The protein localises to the cell inner membrane. It catalyses the reaction K(+)(in) + H(+)(in) = K(+)(out) + H(+)(out). In terms of biological role, responsible for the low-affinity transport of potassium into the cell. Likely operates as a K(+):H(+) symporter. The chain is Low affinity potassium transport system protein Kup from Yersinia pestis (strain Pestoides F).